The chain runs to 229 residues: Demethylmenaquinone methyltransferase (229 aa).

Residues Thr57, Asp77, and Asp101–Val102 each bind S-adenosyl-L-methionine.

Belongs to the class I-like SAM-binding methyltransferase superfamily. MenG/UbiE family.

It carries out the reaction a 2-demethylmenaquinol + S-adenosyl-L-methionine = a menaquinol + S-adenosyl-L-homocysteine + H(+). It functions in the pathway quinol/quinone metabolism; menaquinone biosynthesis; menaquinol from 1,4-dihydroxy-2-naphthoate: step 2/2. Methyltransferase required for the conversion of demethylmenaquinol (DMKH2) to menaquinol (MKH2). The polypeptide is Demethylmenaquinone methyltransferase (Chlamydia trachomatis serovar L2 (strain ATCC VR-902B / DSM 19102 / 434/Bu)).